The sequence spans 284 residues: L-ribulose-5-phosphate 3-epimerase UlaE (284 aa).

The protein belongs to the L-ribulose-5-phosphate 3-epimerase family.

The enzyme catalyses L-ribulose 5-phosphate = L-xylulose 5-phosphate. It participates in cofactor degradation; L-ascorbate degradation; D-xylulose 5-phosphate from L-ascorbate: step 3/4. Functionally, catalyzes the isomerization of L-xylulose-5-phosphate to L-ribulose-5-phosphate. Is involved in the anaerobic L-ascorbate utilization. In Salmonella typhi, this protein is L-ribulose-5-phosphate 3-epimerase UlaE.